The primary structure comprises 553 residues: Dihydroxy-acid dehydratase (553 aa).

Aspartate 78 is a Mg(2+) binding site. Cysteine 119 is a [2Fe-2S] cluster binding site. Mg(2+) is bound by residues aspartate 120 and lysine 121. The residue at position 121 (lysine 121) is an N6-carboxylysine. Cysteine 193 is a [2Fe-2S] cluster binding site. Residue glutamate 441 coordinates Mg(2+). Residue serine 467 is the Proton acceptor of the active site.

It belongs to the IlvD/Edd family. As to quaternary structure, homodimer. Requires [2Fe-2S] cluster as cofactor. The cofactor is Mg(2+).

The enzyme catalyses (2R)-2,3-dihydroxy-3-methylbutanoate = 3-methyl-2-oxobutanoate + H2O. It catalyses the reaction (2R,3R)-2,3-dihydroxy-3-methylpentanoate = (S)-3-methyl-2-oxopentanoate + H2O. It participates in amino-acid biosynthesis; L-isoleucine biosynthesis; L-isoleucine from 2-oxobutanoate: step 3/4. The protein operates within amino-acid biosynthesis; L-valine biosynthesis; L-valine from pyruvate: step 3/4. Functionally, functions in the biosynthesis of branched-chain amino acids. Catalyzes the dehydration of (2R,3R)-2,3-dihydroxy-3-methylpentanoate (2,3-dihydroxy-3-methylvalerate) into 2-oxo-3-methylpentanoate (2-oxo-3-methylvalerate) and of (2R)-2,3-dihydroxy-3-methylbutanoate (2,3-dihydroxyisovalerate) into 2-oxo-3-methylbutanoate (2-oxoisovalerate), the penultimate precursor to L-isoleucine and L-valine, respectively. The chain is Dihydroxy-acid dehydratase from Citrifermentans bemidjiense (strain ATCC BAA-1014 / DSM 16622 / JCM 12645 / Bem) (Geobacter bemidjiensis).